The chain runs to 271 residues: 2-amino-3,7-dideoxy-D-threo-hept-6-ulosonate synthase (271 aa).

Aspartate 33 serves as the catalytic Proton acceptor. Residues 33–37 (DHGVS) and 153–155 (YPR) contribute to the 1-deoxy-D-threo-hexo-2,5-diulose 6-phosphate site. Residue tyrosine 153 is the Proton donor of the active site. Lysine 184 serves as the catalytic Schiff-base intermediate with substrate. Residues 209–210 (GG) and 236–237 (GR) contribute to the 1-deoxy-D-threo-hexo-2,5-diulose 6-phosphate site.

The protein belongs to the DeoC/FbaB aldolase family. ADHS subfamily. Homodecamer.

The catalysed reaction is 1-deoxy-D-threo-hexo-2,5-diulose 6-phosphate + L-aspartate 4-semialdehyde = 2,3-dioxopropyl phosphate + 2-amino-2,3,7-trideoxy-D-lyxo-hept-6-ulosonate. Its function is as follows. Catalyzes a transaldol reaction between 6-deoxy-5-ketofructose 1-phosphate (DKFP) and L-aspartate semialdehyde (ASA) with an elimination of hydroxypyruvaldehyde phosphate to yield 2-amino-3,7-dideoxy-D-threo-hept-6-ulosonate (ADH). Plays a key role in an alternative pathway of the biosynthesis of 3-dehydroquinate (DHQ), which is involved in the canonical pathway for the biosynthesis of aromatic amino acids. The polypeptide is 2-amino-3,7-dideoxy-D-threo-hept-6-ulosonate synthase (Methanococcus aeolicus (strain ATCC BAA-1280 / DSM 17508 / OCM 812 / Nankai-3)).